The following is a 194-amino-acid chain: Putative manganese efflux pump MntP (194 aa).

A run of 6 helical transmembrane segments spans residues 3-23, 37-57, 69-89, 110-132, 147-167, and 172-192; these read PFSI…AAIG, LRAG…GWVL, DHWI…IAGL, LGLA…SLAF, CTFS…NLIG, and ILGG…HLGA.

This sequence belongs to the MntP (TC 9.B.29) family.

It localises to the cell inner membrane. In terms of biological role, probably functions as a manganese efflux pump. The chain is Putative manganese efflux pump MntP from Xanthomonas oryzae pv. oryzae (strain MAFF 311018).